The sequence spans 508 residues: Photosystem II CP47 reaction center protein (508 aa).

The next 6 helical transmembrane spans lie at 21–36, 101–115, 140–156, 203–218, 237–252, and 457–472; these read SVHI…WAGS, IVFS…IWHW, GIHL…FGAF, IAAG…FHLS, VLSS…AFVV, and SFAL…HGAR.

The protein belongs to the PsbB/PsbC family. PsbB subfamily. In terms of assembly, PSII is composed of 1 copy each of membrane proteins PsbA, PsbB, PsbC, PsbD, PsbE, PsbF, PsbH, PsbI, PsbJ, PsbK, PsbL, PsbM, PsbT, PsbX, PsbY, PsbZ, Psb30/Ycf12, at least 3 peripheral proteins of the oxygen-evolving complex and a large number of cofactors. It forms dimeric complexes. Requires Binds multiple chlorophylls. PSII binds additional chlorophylls, carotenoids and specific lipids. as cofactor.

It is found in the plastid. The protein resides in the chloroplast thylakoid membrane. In terms of biological role, one of the components of the core complex of photosystem II (PSII). It binds chlorophyll and helps catalyze the primary light-induced photochemical processes of PSII. PSII is a light-driven water:plastoquinone oxidoreductase, using light energy to abstract electrons from H(2)O, generating O(2) and a proton gradient subsequently used for ATP formation. In Panax ginseng (Korean ginseng), this protein is Photosystem II CP47 reaction center protein.